A 361-amino-acid chain; its full sequence is Chorismate synthase (361 aa).

2 residues coordinate NADP(+): Arg-48 and Arg-54. FMN-binding positions include 125 to 127 (RSS), 238 to 239 (NA), Gly-278, 293 to 297 (KPTSS), and Arg-319.

This sequence belongs to the chorismate synthase family. In terms of assembly, homotetramer. Requires FMNH2 as cofactor.

The catalysed reaction is 5-O-(1-carboxyvinyl)-3-phosphoshikimate = chorismate + phosphate. It participates in metabolic intermediate biosynthesis; chorismate biosynthesis; chorismate from D-erythrose 4-phosphate and phosphoenolpyruvate: step 7/7. In terms of biological role, catalyzes the anti-1,4-elimination of the C-3 phosphate and the C-6 proR hydrogen from 5-enolpyruvylshikimate-3-phosphate (EPSP) to yield chorismate, which is the branch point compound that serves as the starting substrate for the three terminal pathways of aromatic amino acid biosynthesis. This reaction introduces a second double bond into the aromatic ring system. The sequence is that of Chorismate synthase from Vibrio vulnificus (strain CMCP6).